Consider the following 440-residue polypeptide: Long-chain alkane monooxygenase (440 aa).

FMN contacts are provided by residues Asp58, 137-138, Tyr158, and 227-230; these read SH and AGMS.

The protein belongs to the NtaA/SnaA/DszA monooxygenase family. Homodimer.

The protein localises to the secreted. It catalyses the reaction a long-chain alkane + FMNH2 + O2 = a long chain fatty alcohol + FMN + H2O + H(+). Involved in the degradation of long-chain alkanes. Converts alkanes ranging from C(15) to C(36) into their corresponding primary alcohols. This chain is Long-chain alkane monooxygenase, found in Geobacillus thermodenitrificans (strain NG80-2).